The chain runs to 404 residues: G1/S-specific cyclin-E2 (404 aa).

The interval Met1 to Glu44 is disordered. Low complexity predominate over residues Gln12–Gln26. The residue at position 21 (Ser21) is a Phosphoserine. A compositionally biased stretch (basic and acidic residues) spans Thr35–Glu44. Residue Lys348 is modified to N6-lactoyllysine. Position 383 is a phosphoserine (Ser383). Phosphothreonine is present on Thr392.

This sequence belongs to the cyclin family. Cyclin E subfamily. As to quaternary structure, interacts with the CDK2 (in vivo) and CDK3 (in vitro) protein kinases to form a serine/threonine kinase holoenzyme complex. The cyclin subunit imparts substrate specificity to the complex. In terms of processing, phosphorylation by CDK2 triggers its release from CDK2 and degradation via the ubiquitin proteasome pathway. Lactylated at Lys-348. Delactylated by SIRT3. As to expression, according to PubMed:9858585, highest levels of expression in adult testis, thymus and brain. Lower levels in placenta, spleen and colon. Consistently elevated levels in tumor-derived cells compared to non-transformed proliferating cells. According to PubMed:9840927: low levels in thymus, prostate, brain, skeletal muscle, and kidney. Elevated levels in lung. According to PubMed:9840943 highly expressed in testis, placenta, thymus and brain. In a lesser extent in small intestine and colon.

It is found in the nucleus. Functionally, essential for the control of the cell cycle at the late G1 and early S phase. This chain is G1/S-specific cyclin-E2 (CCNE2), found in Homo sapiens (Human).